Consider the following 240-residue polypeptide: Glutathione S-transferase theta-1 (240 aa).

Positions 2–82 (VLELYLDLLS…YLAHKYKVPD (81 aa)) constitute a GST N-terminal domain. Glutathione is bound by residues histidine 40, 53–54 (RV), and 66–67 (ES). Positions 88–222 (DLQARARVDE…VILKVKDCPP (135 aa)) constitute a GST C-terminal domain.

This sequence belongs to the GST superfamily. Theta family. Homodimer. As to expression, in liver, highest expression found in central vein limiting plate hepatocytes. Also expressed in interlobular bile duct epithelial cells. In lung, expressed in club cells and ciliated cells of the bronchiolar epithelium and in type II alveolar cells of the lung parenchyma.

The protein localises to the cytoplasm. It localises to the nucleus. It catalyses the reaction RX + glutathione = an S-substituted glutathione + a halide anion + H(+). Functionally, conjugation of reduced glutathione to a wide number of exogenous and endogenous hydrophobic electrophiles. Also binds steroids, bilirubin, carcinogens and numerous organic anions. Has dichloromethane dehalogenase activity. This is Glutathione S-transferase theta-1 (Gstt1) from Mus musculus (Mouse).